We begin with the raw amino-acid sequence, 1122 residues long: Breast carcinoma-amplified sequence 3 homolog (1122 aa).

The disordered stretch occupies residues 1–41 (MSADSPRRHPSGVVGSGIGLGSGSGTGLGSGSTGGSKSGAA). Residues 14-37 (VGSGIGLGSGSGTGLGSGSTGGSK) show a composition bias toward gly residues. A Phosphoserine modification is found at serine 55. Composition is skewed to low complexity over residues 357-377 (GTTAGSGASSKSSSFDSASGG), 626-641 (GSNSQRQRQRLSSLSD), 966-987 (TKDNASPNPNTNTNPNAIPSSN), and 1036-1051 (LSLEGPPSQSSPPLSL). 5 disordered regions span residues 357-382 (GTTAGSGASSKSSSFDSASGGPDAKQ), 620-644 (GVGVGVGSNSQRQRQRLSSLSDDSG), 966-990 (TKDNASPNPNTNTNPNAIPSSNKVQ), 1033-1054 (NSRLSLEGPPSQSSPPLSLTNG), and 1071-1122 (GVAQ…RRNL). Position 638 is a phosphoserine (serine 638). The span at 1087–1112 (VDDDDEEEEEEEEELDEEAEPDDDER) shows a compositional bias: acidic residues. Positions 1113–1122 (EDRPLGRRNL) are enriched in basic and acidic residues.

The protein belongs to the BCAS3 family. As to expression, expressed in all postembryonic pericardial cells, but not in cardioblasts. Also expressed in Garland cells in third instar larvae (at protein level).

Its subcellular location is the cytoplasm. Functionally, regulates macropinocytosis in pericardial cells. This chain is Breast carcinoma-amplified sequence 3 homolog (rudhira), found in Drosophila melanogaster (Fruit fly).